Reading from the N-terminus, the 417-residue chain is Indole-3-pyruvate monooxygenase YUCCA6 (417 aa).

36-41 (GAGPSG) lines the FAD pocket. 204 to 209 (GCGNSG) is a binding site for NADP(+).

Belongs to the FMO family. FAD serves as cofactor. In terms of tissue distribution, highly expressed in roots but modestly expressed in the cauline leaves and flowers. Expressed in anthers.

It localises to the cytoplasm. The catalysed reaction is indole-3-pyruvate + NADPH + O2 + H(+) = (indol-3-yl)acetate + CO2 + NADP(+) + H2O. Its pathway is plant hormone metabolism; auxin biosynthesis. In terms of biological role, involved in auxin biosynthesis via the indole-3-pyruvic acid (IPA) pathway. Also able to convert in vitro phenyl pyruvate (PPA) to phenyl acetic acid (PAA). Required for the formation of floral organs and vascular tissues. Belongs to the set of redundant YUCCA genes probably responsible for auxin biosynthesis in shoots. This is Indole-3-pyruvate monooxygenase YUCCA6 (YUC6) from Arabidopsis thaliana (Mouse-ear cress).